The primary structure comprises 596 residues: uncharacterized protein (596 aa).

The disordered stretch occupies residues 1 to 31 (MSTSNDPVVSSHDPIKQEKEQETDLEAQVEH). Residues 1-37 (MSTSNDPVVSSHDPIKQEKEQETDLEAQVEHKKRNER) are Cytoplasmic-facing. Over residues 13–22 (DPIKQEKEQE) the composition is skewed to basic and acidic residues. Residues 38 to 58 (GNAFVGFLILIFVYYLLRGGS) form a helical membrane-spanning segment. Residues 59-596 (NDNDKQEMSH…ILVSDSGEEA (538 aa)) are Lumenal-facing. An N-linked (GlcNAc...) asparagine glycan is attached at Asn118. A Zn(2+)-binding site is contributed by His197. Asp199 is a catalytic residue. A Zn(2+)-binding site is contributed by Asp232. Glu266 (proton acceptor) is an active-site residue. Zn(2+)-binding residues include Glu267 and Asp295. 3 N-linked (GlcNAc...) asparagine glycosylation sites follow: Asn466, Asn541, and Asn555. His565 contributes to the Zn(2+) binding site.

This sequence belongs to the peptidase M20A family. The cofactor is Zn(2+).

It localises to the vacuole membrane. This is an uncharacterized protein from Schizosaccharomyces pombe (strain 972 / ATCC 24843) (Fission yeast).